The primary structure comprises 706 residues: Translation initiation factor IF-2 (706 aa).

A disordered region spans residues 55–117 (KEVNSDSNQE…PTMKDEKGLI (63 aa)). Positions 67-81 (VNTDDKLDKIDKPNK) are enriched in basic and acidic residues. Positions 93–108 (KNKKSKKKQKNKKKGP) are enriched in basic residues. A tr-type G domain is found at 208 to 375 (SRPPVVTVMG…MILLVSEVEE (168 aa)). Residues 217 to 224 (GHVDHGKT) form a G1 region. 217–224 (GHVDHGKT) contacts GTP. Residues 242–246 (GITQH) form a G2 region. Positions 263–266 (DTPG) are G3. GTP is bound by residues 263–267 (DTPGH) and 317–320 (NKID). The segment at 317–320 (NKID) is G4. The tract at residues 353–355 (SAI) is G5.

It belongs to the TRAFAC class translation factor GTPase superfamily. Classic translation factor GTPase family. IF-2 subfamily.

It is found in the cytoplasm. In terms of biological role, one of the essential components for the initiation of protein synthesis. Protects formylmethionyl-tRNA from spontaneous hydrolysis and promotes its binding to the 30S ribosomal subunits. Also involved in the hydrolysis of GTP during the formation of the 70S ribosomal complex. The polypeptide is Translation initiation factor IF-2 (Alkaliphilus metalliredigens (strain QYMF)).